Consider the following 75-residue polypeptide: Small ribosomal subunit protein bS18 (75 aa).

It belongs to the bacterial ribosomal protein bS18 family. As to quaternary structure, part of the 30S ribosomal subunit. Forms a tight heterodimer with protein bS6.

Its function is as follows. Binds as a heterodimer with protein bS6 to the central domain of the 16S rRNA, where it helps stabilize the platform of the 30S subunit. The sequence is that of Small ribosomal subunit protein bS18 from Roseobacter denitrificans (strain ATCC 33942 / OCh 114) (Erythrobacter sp. (strain OCh 114)).